The following is a 111-amino-acid chain: WAP four-disulfide core domain protein 12 (111 aa).

Residues 1–23 (MGSSSFLVLTVSLALVTLVAAEG) form the signal peptide. One can recognise a WAP domain in the interval 27 to 74 (GIEKAGVCPADNVRCFKSDPPQCHTDQDCLGARKCCYLHCGFKCVIPV). 4 cysteine pairs are disulfide-bonded: Cys34/Cys62, Cys41/Cys66, Cys49/Cys61, and Cys55/Cys70. The tract at residues 80–111 (GGNKDEDVSGPCPEPGWEAKSPGSSSTGCPQK) is disordered. The span at 101–111 (PGSSSTGCPQK) shows a compositional bias: polar residues.

Its subcellular location is the secreted. Antibacterial protein. Putative acid-stable proteinase inhibitor. The polypeptide is WAP four-disulfide core domain protein 12 (WFDC12) (Papio anubis (Olive baboon)).